A 238-amino-acid chain; its full sequence is MAVEGGMKCVKFLLYVLLLAFCACAVGLIAVGVGAQLVLSQTIIQGATPGSLLPVVIIAVGVFLFLVAFVGCCGACKENYCLMITFAIFLSLIMLVEVAAAIAGYVFRDKVMSEFNNNFRQQMENYPKNNHTASILDRMQADFKCCGAANYTDWEKIPSMSKNRVPDSCCINVTVGCGINFNEKAIHKEGCVEKIGGWLRKNVLVVAAAALGIAFVEVLGIVFACCLVKSIRSGYEVM.

Residues 2 to 11 (AVEGGMKCVK) are Cytoplasmic-facing. Residues 12–32 (FLLYVLLLAFCACAVGLIAVG) traverse the membrane as a helical segment. At 33 to 51 (VGAQLVLSQTIIQGATPGS) the chain is on the extracellular side. A helical membrane pass occupies residues 52–72 (LLPVVIIAVGVFLFLVAFVGC). Topologically, residues 73–81 (CGACKENYC) are cytoplasmic. The chain crosses the membrane as a helical span at residues 82–102 (LMITFAIFLSLIMLVEVAAAI). Residues 103 to 203 (AGYVFRDKVM…KIGGWLRKNV (101 aa)) lie on the Extracellular side of the membrane. N130, N150, and N172 each carry an N-linked (GlcNAc...) asparagine glycan. Residues 204-224 (LVVAAAALGIAFVEVLGIVFA) form a helical membrane-spanning segment. Topologically, residues 225–238 (CCLVKSIRSGYEVM) are cytoplasmic. The Lysosomal targeting motif signature appears at 234–238 (GYEVM).

Belongs to the tetraspanin (TM4SF) family. Interacts with TIMP1 and ITGB1 and recruits TIMP1 to ITGB1. Interacts with CD9. Identified in a complex with CD9 and ITGB3. Interacts with PMEL. Interacts with KDR/VEGFR2; identified in a complex with ITGB1 and KDR/VEGFR2 and is required to recruit KDR to ITGB1 complexes. Interacts with SYT7. Palmitoylated at a low, basal level in unstimulated platelets. The level of palmitoylation increases when platelets are activated by thrombin (in vitro). As to expression, detected in platelets (at protein level). Dysplastic nevi, radial growth phase primary melanomas, hematopoietic cells, tissue macrophages.

The protein localises to the cell membrane. The protein resides in the lysosome membrane. It localises to the late endosome membrane. It is found in the endosome. Its subcellular location is the multivesicular body. The protein localises to the melanosome. The protein resides in the secreted. It localises to the extracellular exosome. It is found in the cell surface. Its function is as follows. Functions as a cell surface receptor for TIMP1 and plays a role in the activation of cellular signaling cascades. Plays a role in the activation of ITGB1 and integrin signaling, leading to the activation of AKT, FAK/PTK2 and MAP kinases. Promotes cell survival, reorganization of the actin cytoskeleton, cell adhesion, spreading and migration, via its role in the activation of AKT and FAK/PTK2. Plays a role in VEGFA signaling via its role in regulating the internalization of KDR/VEGFR2. Plays a role in intracellular vesicular transport processes, and is required for normal trafficking of the PMEL luminal domain that is essential for the development and maturation of melanocytes. Plays a role in the adhesion of leukocytes onto endothelial cells via its role in the regulation of SELP trafficking. May play a role in mast cell degranulation in response to Ms4a2/FceRI stimulation, but not in mast cell degranulation in response to other stimuli. The polypeptide is CD63 antigen (CD63) (Homo sapiens (Human)).